Reading from the N-terminus, the 464-residue chain is Tyrosine--tRNA ligase, mitochondrial (464 aa).

Residue Tyr61 coordinates L-tyrosine. Asp65 is a binding site for ATP. A 'HIGH' region motif is present at residues 66–75 (PTADSLHVGN). Asp105, Tyr209, Gln213, Asp216, and Gln235 together coordinate L-tyrosine. The short motif at 270 to 274 (KFGKS) is the 'KMSKS' region element. Lys273 contacts ATP.

The protein belongs to the class-I aminoacyl-tRNA synthetase family. As to quaternary structure, homodimer.

It localises to the mitochondrion matrix. It carries out the reaction tRNA(Tyr) + L-tyrosine + ATP = L-tyrosyl-tRNA(Tyr) + AMP + diphosphate + H(+). In terms of biological role, catalyzes the attachment of tyrosine to tRNA(Tyr) in a two-step reaction: tyrosine is first activated by ATP to form Tyr-AMP and then transferred to the acceptor end of tRNA(Tyr). This Drosophila melanogaster (Fruit fly) protein is Tyrosine--tRNA ligase, mitochondrial.